We begin with the raw amino-acid sequence, 122 residues long: ATP synthase epsilon chain (122 aa).

The span at 97–112 shows a compositional bias: basic and acidic residues; the sequence is EDLKSERELTRSRGDA. A disordered region spans residues 97 to 122; sequence EDLKSERELTRSRGDAALRATRRLNS.

The protein belongs to the ATPase epsilon chain family. As to quaternary structure, F-type ATPases have 2 components, CF(1) - the catalytic core - and CF(0) - the membrane proton channel. CF(1) has five subunits: alpha(3), beta(3), gamma(1), delta(1), epsilon(1). CF(0) has three main subunits: a, b and c.

The protein resides in the cell membrane. Its function is as follows. Produces ATP from ADP in the presence of a proton gradient across the membrane. This is ATP synthase epsilon chain from Corynebacterium aurimucosum (strain ATCC 700975 / DSM 44827 / CIP 107346 / CN-1) (Corynebacterium nigricans).